Consider the following 194-residue polypeptide: ATP-dependent Clp protease proteolytic subunit (194 aa).

The active-site Nucleophile is serine 98. Histidine 123 is a catalytic residue.

This sequence belongs to the peptidase S14 family. In terms of assembly, fourteen ClpP subunits assemble into 2 heptameric rings which stack back to back to give a disk-like structure with a central cavity, resembling the structure of eukaryotic proteasomes.

It is found in the cytoplasm. The enzyme catalyses Hydrolysis of proteins to small peptides in the presence of ATP and magnesium. alpha-casein is the usual test substrate. In the absence of ATP, only oligopeptides shorter than five residues are hydrolyzed (such as succinyl-Leu-Tyr-|-NHMec, and Leu-Tyr-Leu-|-Tyr-Trp, in which cleavage of the -Tyr-|-Leu- and -Tyr-|-Trp bonds also occurs).. Its function is as follows. Cleaves peptides in various proteins in a process that requires ATP hydrolysis. Has a chymotrypsin-like activity. Plays a major role in the degradation of misfolded proteins. The sequence is that of ATP-dependent Clp protease proteolytic subunit from Ruminiclostridium cellulolyticum (strain ATCC 35319 / DSM 5812 / JCM 6584 / H10) (Clostridium cellulolyticum).